Here is a 568-residue protein sequence, read N- to C-terminus: PWWP domain-containing protein2 (568 aa).

Over residues 1 to 19 (MTEIKDSSVKDENPGKQEE) the composition is skewed to basic and acidic residues. 3 disordered regions span residues 1-126 (MTEI…YKPG), 213-340 (QSTP…DVAK), and 465-568 (IASL…TGQK). Residues 29 to 46 (MSTATNNSKNIETTSSNG) show a composition bias toward polar residues. 2 stretches are compositionally biased toward basic and acidic residues: residues 48-88 (EDIK…KTIE) and 100-122 (KSQK…ERVN). In terms of domain architecture, PWWP spans 125–189 (PGMRVLTKMS…SDSLTPLTSE (65 aa)). Residues 214-228 (STPDLDSLSVPSSES) are compositionally biased toward low complexity. Residues 229–249 (EVSEEESDQEMSEPSPIEEDY) show a composition bias toward acidic residues. Residues 255 to 266 (RRITRKGTKKKT) show a composition bias toward basic residues. Residues 281–292 (LNASSNVSSNPA) show a composition bias toward polar residues. Acidic residues predominate over residues 325–336 (KEEEEGSVANEE). 2 stretches are compositionally biased toward basic and acidic residues: residues 489–500 (KQNEDNEDKVKA) and 514–541 (DASK…KDFA).

The protein is PWWP domain-containing protein2 (pdp2) of Schizosaccharomyces pombe (strain 972 / ATCC 24843) (Fission yeast).